Here is a 1160-residue protein sequence, read N- to C-terminus: Envelope glycoprotein (1160 aa).

An N-terminal signal peptide occupies residues 1-22; that stretch reads MDTPGSLQVIAIISLLLVGGAS. Residues 23–853 are Extracellular-facing; it reads QPATFLEKAL…DGSVWSQLQL (831 aa). N-linked (GlcNAc...) asparagine; by host glycosylation is found at Asn50, Asn95, Asn109, Asn134, Asn148, Asn232, Asn254, Asn304, Asn323, Asn621, Asn664, Asn722, and Asn771. A disordered region spans residues 230 to 251; the sequence is VPNSTLSPTGTTDFTKFTPNPI. Residues 854 to 874 traverse the membrane as a helical segment; sequence IIVVITCTIPLLWVLNTCLFF. Topologically, residues 875 to 1048 are cytoplasmic; it reads KLRRAIRRER…VNQHAEYMGK (174 aa). Residues 1049–1069 form a helical membrane-spanning segment; that stretch reads PVIVTLAGLVITPVGLAWIPL. Over 1070-1127 the chain is Extracellular; it reads PQQEPLEKLFMVPNSMPHVTVAMADYHETKEMGKIVKDINNEELLLVKPQLFKWGPEG. Residues 1128–1148 form a helical membrane-spanning segment; sequence FFVACPLVIRGVVTGHSLLHI. The Cytoplasmic portion of the chain corresponds to 1149–1160; that stretch reads ACPATAVQAEGT.

As to quaternary structure, the mature envelope protein (Env) consists of a trimer of SU-TM heterodimers attached by non-covalent interactions or by a labile interchain disulfide bond. Specific enzymatic cleavages in vivo yield mature proteins. Envelope glycoproteins are synthesized as an inactive precursor that is N-glycosylated and processed likely by host cell furin or by a furin-like protease in the Golgi to yield the mature SU and TM proteins. The cleavage site between SU and TM requires the minimal sequence [KR]-X-[KR]-R.

Its subcellular location is the virion membrane. It localises to the host cell membrane. Functionally, (SU) attaches the virus to the host cell by binding to its receptor. This interaction triggers the refolding of the transmembrane protein (TM) and is thought to activate its fusogenic potential by unmasking its fusion peptide. Fusion occurs at the host cell plasma membrane. (TM) acts as a class I viral fusion protein. Under the current model, the protein has at least 3 conformational states: pre-fusion native state, pre-hairpin intermediate state, and post-fusion hairpin state. During viral and target cell membrane fusion, the coiled coil regions (heptad repeats) assume a trimer-of-hairpins structure, positioning the fusion peptide in close proximity to the C-terminal region of the ectodomain. The formation of this structure appears to drive apposition and subsequent fusion of viral and target cell membranes. Membranes fusion leads to delivery of the nucleocapsid into the cytoplasm. This is Envelope glycoprotein (env) from Walleye dermal sarcoma virus (WDSV).